We begin with the raw amino-acid sequence, 409 residues long: tRNA-specific 2-thiouridylase MnmA (409 aa).

ATP is bound by residues 40–47 and L66; that span reads GLSGGVDS. C127 acts as the Nucleophile in catalysis. C127 and C237 form a disulfide bridge. An ATP-binding site is contributed by G152. The interval 156–179 is disordered; sequence RIRHREDPEPQQALPGDSSGRHQL. Residues 187–189 form an interaction with tRNA region; it reads KDQ. C237 (cysteine persulfide intermediate) is an active-site residue. The interval 342–343 is interaction with tRNA; sequence RY.

This sequence belongs to the MnmA/TRMU family.

It localises to the cytoplasm. It catalyses the reaction S-sulfanyl-L-cysteinyl-[protein] + uridine(34) in tRNA + AH2 + ATP = 2-thiouridine(34) in tRNA + L-cysteinyl-[protein] + A + AMP + diphosphate + H(+). In terms of biological role, catalyzes the 2-thiolation of uridine at the wobble position (U34) of tRNA, leading to the formation of s(2)U34. The sequence is that of tRNA-specific 2-thiouridylase MnmA from Prochlorococcus marinus (strain MIT 9303).